The primary structure comprises 94 residues: Host-modulation protein 11K (94 aa).

Interacts with host GRB2; this interaction alters host cell environment by modulating host signaling pathways.

It is found in the host cytoplasm. Enhances viral DNA replication and virion release. Mechansitically, optimizes viral DNA replication by interacting with host GRB2 to inhibit the negative effect of ERK signaling on B19 viral replication. Plays a role in viral infectivity. Induces apoptosis of primary erythroid progenitor cells. This Human parvovirus B19 (strain HV) (HPV B19) protein is Host-modulation protein 11K (11K).